We begin with the raw amino-acid sequence, 174 residues long: Bifunctional protein PyrR (174 aa).

Substrate contacts are provided by residues Ser38 to Gly39, Asp95 to Thr103, and Arg128. The PRPP-binding motif lies at Ile91–Thr103.

This sequence belongs to the purine/pyrimidine phosphoribosyltransferase family. PyrR subfamily.

The catalysed reaction is UMP + diphosphate = 5-phospho-alpha-D-ribose 1-diphosphate + uracil. Functionally, regulates the transcription of the pyrimidine nucleotide (pyr) operon in response to exogenous pyrimidines. Also displays a weak uracil phosphoribosyltransferase activity which is not physiologically significant. The chain is Bifunctional protein PyrR from Ralstonia nicotianae (strain ATCC BAA-1114 / GMI1000) (Ralstonia solanacearum).